The chain runs to 456 residues: Peptide chain release factor PrfB1, chloroplastic (456 aa).

A chloroplast-targeting transit peptide spans 1–58; it reads MSMELTVLGPLAGRSFAIAGKPKLLLLRPTNLPLLRLSLPLSLPNFSSSSRFNSPIVF.

The protein belongs to the prokaryotic/mitochondrial release factor family. As to expression, expressed in leaves, stems and flowers.

The protein localises to the plastid. Its subcellular location is the chloroplast stroma. Its function is as follows. Directs the termination of translation in response to the peptide chain termination codon UGA. Required for the proper translation, stability and normal processing of UGA-containing polycistronic transcripts in chloroplasts. The sequence is that of Peptide chain release factor PrfB1, chloroplastic from Arabidopsis thaliana (Mouse-ear cress).